We begin with the raw amino-acid sequence, 287 residues long: MIKIGAHMKISKGFTKVPPDTANIGGNTFQIFTSSPRVWKVNPPKENDVEGFKNAMTEFNINFEDVLVHSSYLINLASPKDDIREKSITAMIEEIKATDQLGILHYNFHPGSHLGEGEEFGINKILEGLDIIFKEVQNTKVTILLENVAQKGSNIGYSMEQLGRIINKSPWKERLGITYDTCHGFDSNYDIRKKEEVQRLLDEIDKYIGLNKLKMIHLNDSKYDVGAAKDRHEFIGKGYIGREGFKTFLSFDEISKLPLILETPGDDPEHSQDIKVVKEIFKELGKL.

Residues histidine 69, histidine 109, glutamate 146, aspartate 180, histidine 183, histidine 217, aspartate 230, histidine 232, and glutamate 262 each contribute to the Zn(2+) site.

Belongs to the AP endonuclease 2 family. The cofactor is Zn(2+).

It carries out the reaction Endonucleolytic cleavage to 5'-phosphooligonucleotide end-products.. Its function is as follows. Endonuclease IV plays a role in DNA repair. It cleaves phosphodiester bonds at apurinic or apyrimidinic (AP) sites, generating a 3'-hydroxyl group and a 5'-terminal sugar phosphate. The polypeptide is Probable endonuclease 4 (Petrotoga mobilis (strain DSM 10674 / SJ95)).